We begin with the raw amino-acid sequence, 143 residues long: 3-hydroxyacyl-[acyl-carrier-protein] dehydratase FabZ (143 aa).

H49 is an active-site residue.

It belongs to the thioester dehydratase family. FabZ subfamily.

The protein resides in the cytoplasm. The enzyme catalyses a (3R)-hydroxyacyl-[ACP] = a (2E)-enoyl-[ACP] + H2O. Functionally, involved in unsaturated fatty acids biosynthesis. Catalyzes the dehydration of short chain beta-hydroxyacyl-ACPs and long chain saturated and unsaturated beta-hydroxyacyl-ACPs. The protein is 3-hydroxyacyl-[acyl-carrier-protein] dehydratase FabZ of Wolbachia sp. subsp. Drosophila simulans (strain wRi).